We begin with the raw amino-acid sequence, 378 residues long: tRNA-specific 2-thiouridylase MnmA (378 aa).

ATP-binding positions include Ala6 to Ser13 and Leu32. The active-site Nucleophile is Cys101. Cys101 and Cys199 are oxidised to a cystine. Residue Gly125 participates in ATP binding. The interaction with tRNA stretch occupies residues Lys148 to Gln150. The active-site Cysteine persulfide intermediate is the Cys199.

The protein belongs to the MnmA/TRMU family.

The protein resides in the cytoplasm. The enzyme catalyses S-sulfanyl-L-cysteinyl-[protein] + uridine(34) in tRNA + AH2 + ATP = 2-thiouridine(34) in tRNA + L-cysteinyl-[protein] + A + AMP + diphosphate + H(+). Catalyzes the 2-thiolation of uridine at the wobble position (U34) of tRNA, leading to the formation of s(2)U34. The protein is tRNA-specific 2-thiouridylase MnmA of Renibacterium salmoninarum (strain ATCC 33209 / DSM 20767 / JCM 11484 / NBRC 15589 / NCIMB 2235).